Here is a 255-residue protein sequence, read N- to C-terminus: Triosephosphate isomerase (255 aa).

9-11 serves as a coordination point for substrate; the sequence is NWK. Residue histidine 95 is the Electrophile of the active site. The active-site Proton acceptor is the glutamate 167. Residues glycine 173, serine 212, and 233–234 contribute to the substrate site; that span reads GG.

This sequence belongs to the triosephosphate isomerase family. Homodimer.

Its subcellular location is the cytoplasm. It catalyses the reaction D-glyceraldehyde 3-phosphate = dihydroxyacetone phosphate. Its pathway is carbohydrate biosynthesis; gluconeogenesis. It functions in the pathway carbohydrate degradation; glycolysis; D-glyceraldehyde 3-phosphate from glycerone phosphate: step 1/1. In terms of biological role, involved in the gluconeogenesis. Catalyzes stereospecifically the conversion of dihydroxyacetone phosphate (DHAP) to D-glyceraldehyde-3-phosphate (G3P). The chain is Triosephosphate isomerase from Salmonella agona (strain SL483).